Reading from the N-terminus, the 85-residue chain is Large ribosomal subunit protein bL27 (85 aa).

The protein belongs to the bacterial ribosomal protein bL27 family.

This Azobacteroides pseudotrichonymphae genomovar. CFP2 protein is Large ribosomal subunit protein bL27.